The sequence spans 582 residues: Mitogen-activated protein kinase 17 (582 aa).

A disordered region spans residues S22 to D61. Residues D33 to D45 show a composition bias toward basic and acidic residues. The 292-residue stretch at Y105–F396 folds into the Protein kinase domain. Residues I111 to V119 and K134 each bind ATP. Residue D231 is the Proton acceptor of the active site. T267 carries the phosphothreonine modification. The TXY signature appears at T267–Y269. Residue Y269 is modified to Phosphotyrosine. 2 disordered regions span residues E474–H502 and I542–T582. Residues S482–S491 show a composition bias toward polar residues. A compositionally biased stretch (basic and acidic residues) spans P493 to H502. Residues D557 to E572 are compositionally biased toward acidic residues.

Belongs to the protein kinase superfamily. CMGC Ser/Thr protein kinase family. MAP kinase subfamily. In terms of processing, dually phosphorylated on Thr-267 and Tyr-269, which activates the enzyme.

It catalyses the reaction L-seryl-[protein] + ATP = O-phospho-L-seryl-[protein] + ADP + H(+). The catalysed reaction is L-threonyl-[protein] + ATP = O-phospho-L-threonyl-[protein] + ADP + H(+). Activated by threonine and tyrosine phosphorylation. The polypeptide is Mitogen-activated protein kinase 17 (MPK17) (Oryza sativa subsp. japonica (Rice)).